A 320-amino-acid chain; its full sequence is Malate dehydrogenase (320 aa).

NAD(+) contacts are provided by residues 10-15 (GSGMIG) and aspartate 34. Substrate is bound by residues arginine 83 and arginine 89. Residues asparagine 96 and 119–121 (ITN) each bind NAD(+). Substrate-binding residues include asparagine 121 and arginine 152. Residue histidine 176 is the Proton acceptor of the active site.

It belongs to the LDH/MDH superfamily. MDH type 3 family.

It carries out the reaction (S)-malate + NAD(+) = oxaloacetate + NADH + H(+). Functionally, catalyzes the reversible oxidation of malate to oxaloacetate. The chain is Malate dehydrogenase from Bartonella tribocorum (strain CIP 105476 / IBS 506).